Here is a 285-residue protein sequence, read N- to C-terminus: 4-hydroxybenzoate octaprenyltransferase (285 aa).

Helical transmembrane passes span 20–39 (GSYL…AQGL), 92–112 (ALGL…ALNW), 137–157 (FPQV…FMAV), 159–179 (EAVP…TVAY), 206–226 (YDRL…LGMG), 228–248 (YLGF…LFIH), and 260–280 (ACFS…LGIA).

Belongs to the UbiA prenyltransferase family. Requires Mg(2+) as cofactor.

It is found in the cell inner membrane. The catalysed reaction is all-trans-octaprenyl diphosphate + 4-hydroxybenzoate = 4-hydroxy-3-(all-trans-octaprenyl)benzoate + diphosphate. It functions in the pathway cofactor biosynthesis; ubiquinone biosynthesis. Catalyzes the prenylation of para-hydroxybenzoate (PHB) with an all-trans polyprenyl group. Mediates the second step in the final reaction sequence of ubiquinone-8 (UQ-8) biosynthesis, which is the condensation of the polyisoprenoid side chain with PHB, generating the first membrane-bound Q intermediate 3-octaprenyl-4-hydroxybenzoate. The polypeptide is 4-hydroxybenzoate octaprenyltransferase (Pseudoalteromonas atlantica (strain T6c / ATCC BAA-1087)).